Here is a 294-residue protein sequence, read N- to C-terminus: Probable HTH-type transcriptional regulator LrrA (294 aa).

Residues 1-58 enclose the HTH lysR-type domain; sequence MNITQLQILAAVVETGNFSAAALQLDLSQSAVSRAIAALEDELGVVLLSRGRFGARPT. Positions 18 to 37 form a DNA-binding region, H-T-H motif; the sequence is FSAAALQLDLSQSAVSRAIA.

Belongs to the LysR transcriptional regulatory family.

This chain is Probable HTH-type transcriptional regulator LrrA (lrrA), found in Synechococcus elongatus (strain ATCC 33912 / PCC 7942 / FACHB-805) (Anacystis nidulans R2).